The following is a 162-amino-acid chain: Protein LTO1 (162 aa).

Residues 17 to 53 (GFLEGQNENIKQSFLEGKQYGLQVGFQRFTLLGQMEG) are deca-GX3 motif; required for interaction with YAE1 and the CIA complex.

The protein belongs to the LTO1 family. Forms a complex with YAE1; the complex bridges the interaction between the CIA complex and RLI1. Associates with the CIA complex (via its C-terminal tryptophan).

It localises to the nucleus. Functionally, essential for life in oxygen, but nonessential under anaerobic conditions. Required for biogenesis of the large ribosomal subunit and initiation of translation in oxygen. The complex LTO1:YAE1 functions as a target specific adapter that recruits apo-RLI1 to the cytosolic iron-sulfur protein assembly (CIA) complex machinery. The sequence is that of Protein LTO1 from Saccharomyces cerevisiae (strain ATCC 204508 / S288c) (Baker's yeast).